The primary structure comprises 310 residues: MRKDRQNKITEVGIYLKDLQNRLCRAFEKEEGESRFQETLWEKPNGGGGRTRLLTEGHVIEQGGVNFSCVYGNQLPPAATQKHPEISGFAFQAEGLSLVIHPRNPYVPTVHANFRFFIAGKDEADPRWWFGGGYDLTPYYGFEEDCRHWHRVAKKACDRFGEAIYPRFKAACDDYFYLKHRNEPRGIGGLFFDDLNEWEFKRCFEFIKILGDSFLEAYLPIMQNRKNHPYGERQREFQLYRRGRYVEFNLLYDRGTRFGLEFGGRTESILMSLPPRVVWRPNWEPEPGSEEARLYEDYLVRRNWVSVSGA.

Ser-97 is a binding site for substrate. A divalent metal cation is bound by residues His-101 and His-111. The Proton donor role is filled by His-111. Residue 113–115 (NFR) coordinates substrate. A divalent metal cation contacts are provided by His-150 and His-180. The tract at residues 245-280 (YVEFNLLYDRGTRFGLEFGGRTESILMSLPPRVVWR) is important for dimerization. 263–265 (GGR) provides a ligand contact to substrate.

This sequence belongs to the aerobic coproporphyrinogen-III oxidase family. As to quaternary structure, homodimer. It depends on a divalent metal cation as a cofactor.

It localises to the cytoplasm. The catalysed reaction is coproporphyrinogen III + O2 + 2 H(+) = protoporphyrinogen IX + 2 CO2 + 2 H2O. It functions in the pathway porphyrin-containing compound metabolism; protoporphyrin-IX biosynthesis; protoporphyrinogen-IX from coproporphyrinogen-III (O2 route): step 1/1. Its function is as follows. Involved in the heme biosynthesis. Catalyzes the aerobic oxidative decarboxylation of propionate groups of rings A and B of coproporphyrinogen-III to yield the vinyl groups in protoporphyrinogen-IX. This chain is Oxygen-dependent coproporphyrinogen-III oxidase, found in Coxiella burnetii (strain RSA 493 / Nine Mile phase I).